The primary structure comprises 472 residues: Flap endonuclease 1 (472 aa).

The tract at residues 1–106 is N-domain; the sequence is MGIKGLARFL…EELMKRKERR (106 aa). Position 34 (D34) interacts with Mg(2+). 2 residues coordinate DNA: R47 and R72. The Mg(2+) site is built by D88, E160, E162, D181, and D183. The interval 124–263 is I-domain; the sequence is TIRKQLIRTI…LTAYKLLKKH (140 aa). A DNA-binding site is contributed by E160. Residues G241 and D243 each coordinate DNA. D243 is a binding site for Mg(2+). Residues 348-356 form an interaction with PCNA region; that stretch reads AQTSLDSFF.

Belongs to the XPG/RAD2 endonuclease family. FEN1 subfamily. In terms of assembly, interacts with PCNA. Three molecules of FEN1 bind to one PCNA trimer with each molecule binding to one PCNA monomer. PCNA stimulates the nuclease activity without altering cleavage specificity. Requires Mg(2+) as cofactor. In terms of processing, phosphorylated. Phosphorylation upon DNA damage induces relocalization to the nuclear plasma.

It is found in the nucleus. The protein localises to the nucleolus. The protein resides in the nucleoplasm. Its subcellular location is the mitochondrion. Functionally, structure-specific nuclease with 5'-flap endonuclease and 5'-3' exonuclease activities involved in DNA replication and repair. During DNA replication, cleaves the 5'-overhanging flap structure that is generated by displacement synthesis when DNA polymerase encounters the 5'-end of a downstream Okazaki fragment. It enters the flap from the 5'-end and then tracks to cleave the flap base, leaving a nick for ligation. Also involved in the long patch base excision repair (LP-BER) pathway, by cleaving within the apurinic/apyrimidinic (AP) site-terminated flap. Acts as a genome stabilization factor that prevents flaps from equilibrating into structures that lead to duplications and deletions. Also possesses 5'-3' exonuclease activity on nicked or gapped double-stranded DNA, and exhibits RNase H activity. Also involved in replication and repair of rDNA and in repairing mitochondrial DNA. This Cryptosporidium muris (strain RN66) protein is Flap endonuclease 1.